Consider the following 381-residue polypeptide: Neuropeptide Y receptor type 2 (381 aa).

Residues 1-37 (MGPIGTEADENQTVEEIKVEPYGPGHTTPRGELAPDP) are disordered. Topologically, residues 1-52 (MGPIGTEADENQTVEEIKVEPYGPGHTTPRGELAPDPEPELIDSTKLTEVRV) are extracellular. Asn-11 is a glycosylation site (N-linked (GlcNAc...) asparagine). Residues 53 to 73 (VLILAYCSIILLGVVGNSLVI) form a helical membrane-spanning segment. Residues 74–87 (HVVIKFKSMRTVTN) lie on the Cytoplasmic side of the membrane. A helical transmembrane segment spans residues 88–108 (FFIANLAVADLLVNTLCLPFT). At 109–125 (LTYTLMGEWKMGPVLCH) the chain is on the extracellular side. A disulfide bridge links Cys-124 with Cys-204. The helical transmembrane segment at 126 to 146 (LVPYAQGLAVQVSTVTLTVIA) threads the bilayer. The Cytoplasmic portion of the chain corresponds to 147–166 (LDRHRCIVYHLDSKISKQNS). A helical membrane pass occupies residues 167–187 (FLIIGLAWGISALLASPLAIF). At 188 to 217 (REYSLIEIIPDFEIVACTEKWPGEEKSIYG) the chain is on the extracellular side. The helical transmembrane segment at 218 to 238 (TVYSLSSLLILYVLPLGIISV) threads the bilayer. Over 239–269 (SYVRIWSKLKNHVSPGAANDHYHQRRQKTTK) the chain is Cytoplasmic. Residues 270–290 (MLVFVVVVFAVSWLPLHAFQL) form a helical membrane-spanning segment. The Extracellular segment spans residues 291 to 305 (AVDIDSQVLDLKEYK). The chain crosses the membrane as a helical span at residues 306 to 326 (LIFTVFHIIAMCSTFANPLLY). Residues 327–381 (GWMNSNYRKAFLSAFRCQQRLDAIQSEVCVTGKAKTNVEVEKNHGAADSAEATNV) lie on the Cytoplasmic side of the membrane. The S-palmitoyl cysteine moiety is linked to residue Cys-343.

This sequence belongs to the G-protein coupled receptor 1 family.

Its subcellular location is the cell membrane. Functionally, receptor for neuropeptide Y and peptide YY. This Cavia porcellus (Guinea pig) protein is Neuropeptide Y receptor type 2 (NPY2R).